The following is a 205-amino-acid chain: Imidazole glycerol phosphate synthase subunit HisH (205 aa).

In terms of domain architecture, Glutamine amidotransferase type-1 spans 3 to 205; sequence RIALLDYGMG…LLKNFVEWNI (203 aa). The active-site Nucleophile is Cys80. Catalysis depends on residues His185 and Glu187.

As to quaternary structure, heterodimer of HisH and HisF.

Its subcellular location is the cytoplasm. It catalyses the reaction 5-[(5-phospho-1-deoxy-D-ribulos-1-ylimino)methylamino]-1-(5-phospho-beta-D-ribosyl)imidazole-4-carboxamide + L-glutamine = D-erythro-1-(imidazol-4-yl)glycerol 3-phosphate + 5-amino-1-(5-phospho-beta-D-ribosyl)imidazole-4-carboxamide + L-glutamate + H(+). The catalysed reaction is L-glutamine + H2O = L-glutamate + NH4(+). Its pathway is amino-acid biosynthesis; L-histidine biosynthesis; L-histidine from 5-phospho-alpha-D-ribose 1-diphosphate: step 5/9. Functionally, IGPS catalyzes the conversion of PRFAR and glutamine to IGP, AICAR and glutamate. The HisH subunit catalyzes the hydrolysis of glutamine to glutamate and ammonia as part of the synthesis of IGP and AICAR. The resulting ammonia molecule is channeled to the active site of HisF. The sequence is that of Imidazole glycerol phosphate synthase subunit HisH from Acinetobacter baylyi (strain ATCC 33305 / BD413 / ADP1).